A 133-amino-acid polypeptide reads, in one-letter code: Large ribosomal subunit protein eL14 (133 aa).

The protein belongs to the eukaryotic ribosomal protein eL14 family.

In Pisum sativum (Garden pea), this protein is Large ribosomal subunit protein eL14.